The chain runs to 367 residues: MNPVQQPAQHRSPASLLHLPHPKRAQEAPDMGLYCDNFMFSQQNLHPSQRAPNFSIGGEFTPPANPYLWLGGPGMNNAPNYSPAPAPYIPSAFSAPQRHFMANSAAFGGADLGWMSAASQEELLKMVRPPYSYSALIAMAIQNASDKRLTLSQIYQYVAENFPFYKKSKAGWQNSIRHNLSLNDCFKKMPRDENDPGKGNYWTLDSNCEKMFDNGNFRRKRKPKSESNNAKIAKRDEDHLNPKGKESPPMITPSSSPEVLSPTGHSKSPSPPTVTYTPCLTNFIGSMTAVDSATMNRQSPLGLLNELSQRNITGLSSFISGSAVDQSSEHQDNSLFYNRSPYYTNQKQPHFLQQLHPQQPPLYQGRY.

2 disordered regions span residues 1 to 21 (MNPVQQPAQHRSPASLLHLPH) and 213 to 274 (DNGN…PPTV). Residues 128–222 (RPPYSYSALI…DNGNFRRKRK (95 aa)) constitute a DNA-binding region (fork-head). The segment covering 233–246 (AKRDEDHLNPKGKE) has biased composition (basic and acidic residues). Polar residues predominate over residues 252 to 274 (TPSSSPEVLSPTGHSKSPSPPTV).

As to expression, initially localized to the animal hemisphere (the presumptive ectoderm) of early-mid blastula embryos. Becomes restricted to head placodes, excluding the otic placodes, by the tailbud stages.

The protein resides in the nucleus. In terms of biological role, transcription factor. Essential for ventral specification of the early cephalic (head) ectoderm during gastrulation, playing a role in the 'non-neural' versus 'neural' cell fate choice. Binds to DNA via the target sequence 5'-[AG]TAAA[CT]A-3', with 5'-ATAAACA-3' being the preferred binding site. This Xenopus laevis (African clawed frog) protein is Forkhead box protein I1-B (foxi1-b).